A 372-amino-acid polypeptide reads, in one-letter code: Pristinol synthase (372 aa).

A compositionally biased stretch (basic and acidic residues) spans 1–12 (MAHETTSGRRLP). The tract at residues 1–23 (MAHETTSGRRLPDPTSPSDPTRR) is disordered. Positions 100 and 104 each coordinate Mg(2+). The DDXXD motif motif lies at 100–104 (DDQFD). Residue arginine 197 participates in substrate binding. Mg(2+) contacts are provided by asparagine 243 and serine 247. Lysine 250 is a substrate binding site. Glutamate 251 contributes to the Mg(2+) binding site. Residue 337 to 338 (RY) coordinates substrate. The segment at 349 to 372 (GRRRPWDGLTTATGTASPRHPRRA) is disordered.

The protein belongs to the terpene synthase family. Mg(2+) is required as a cofactor.

The catalysed reaction is (2E,6E)-farnesyl diphosphate + H2O = (+)-(2S,3R,9R)-pristinol + diphosphate. The protein operates within secondary metabolite biosynthesis; terpenoid biosynthesis. Functionally, catalyzes the conversion of (2E,6E)-farnesyl diphosphate (FPP) to yield a new 5-8 bicyclic (pristinane) sesquiterpenol (+)-(2S,3R,9R)-pristinol via a 1,11-cyclization, which requires the abstraction of the pyrophosphate from FPP to yield the humulyl cation. The only accepted substrate is farnesyl diphosphate (FPP). The protein is Pristinol synthase of Streptomyces pristinaespiralis (strain ATCC 25486 / DSM 40338 / CBS 914.69 / JCM 4507 / KCC S-0507 / NBRC 13074 / NRRL 2958 / 5647).